A 405-amino-acid polypeptide reads, in one-letter code: Argininosuccinate synthase (405 aa).

11-19 (AYSGGLDTS) is a binding site for ATP. Tyrosine 90 provides a ligand contact to L-citrulline. Residue glycine 119 coordinates ATP. Residues threonine 121, asparagine 125, and aspartate 126 each contribute to the L-aspartate site. Residue asparagine 125 coordinates L-citrulline. L-citrulline contacts are provided by arginine 129, serine 178, serine 187, glutamate 263, and tyrosine 275.

It belongs to the argininosuccinate synthase family. Type 1 subfamily. In terms of assembly, homotetramer.

It localises to the cytoplasm. The catalysed reaction is L-citrulline + L-aspartate + ATP = 2-(N(omega)-L-arginino)succinate + AMP + diphosphate + H(+). The protein operates within amino-acid biosynthesis; L-arginine biosynthesis; L-arginine from L-ornithine and carbamoyl phosphate: step 2/3. The polypeptide is Argininosuccinate synthase (Legionella pneumophila subsp. pneumophila (strain Philadelphia 1 / ATCC 33152 / DSM 7513)).